Reading from the N-terminus, the 91-residue chain is Putative defective replication initiation protein (91 aa).

The protein is Putative defective replication initiation protein (repA1) of Escherichia coli (strain K12).